A 324-amino-acid chain; its full sequence is HTH-type transcriptional regulator GlxA (324 aa).

An HTH araC/xylS-type domain is found at 223 to 321 (LAVLEKMETA…SQTPGSLRRR (99 aa)). 2 DNA-binding regions (H-T-H motif) span residues 240–261 (TAMA…REHR) and 288–311 (IPEI…KRLF).

The sequence is that of HTH-type transcriptional regulator GlxA (glxA) from Rhizobium meliloti (strain 1021) (Ensifer meliloti).